A 322-amino-acid chain; its full sequence is MSFKSQSIGIIGAPFSKGQPRGGVEEGPTALRKAGLLEKLKEQECDVKDYGDLCFADVPNDTPFQIVKNPRSVGKANQQLADVVAEIKKNGRTSLVLGGDHSMAIGSISGHARVHPDLCVIWVDAHTDINTPLTTTTGNLHGQPVSFLLKELKEKIPEVPGLSWVTPCLSAKDIVYIGLRDVDPAEHYILKTLGIKYFSMIEVDKLGIGKVMEEAFSYLLGRKKRPIHLSFDVDGLDPFFTPATGTPVHGGLSYREGIYITEEIYKTGLLSGLDIMEVNPSLGKTPEEVTRTVNTAVALVLACFGVAREGNHKPIDYLKPPK.

A disordered region spans residues 1-27 (MSFKSQSIGIIGAPFSKGQPRGGVEEG). Ser-7 bears the Phosphoserine mark. The residue at position 17 (Lys-17) is an N6-succinyllysine. The residue at position 72 (Ser-72) is a Phosphoserine. Residue Lys-75 is modified to N6-succinyllysine. Residues His-101, Asp-124, His-126, and Asp-128 each contribute to the Mn(2+) site. Residues 126 to 130 (HTDIN) and 137 to 139 (TGN) contribute to the substrate site. At Ser-163 the chain carries Phosphoserine. Substrate is bound at residue Asp-183. Ser-217 bears the Phosphoserine mark. Mn(2+) contacts are provided by Asp-232 and Asp-234. Substrate-binding residues include Thr-246 and Glu-277.

It belongs to the arginase family. In terms of assembly, homotrimer. Interacts with CMTM6. Requires Mn(2+) as cofactor.

The protein resides in the cytoplasm. It carries out the reaction L-arginine + H2O = urea + L-ornithine. Its pathway is nitrogen metabolism; urea cycle; L-ornithine and urea from L-arginine: step 1/1. The sequence is that of Arginase-1 (ARG1) from Sus scrofa (Pig).